Consider the following 304-residue polypeptide: MILQRTLKQAISATGVGLHSGERVKLTLLPAPPDTGIVFRRTDLPEPVDVKVEPSLVNDTRLSSTLVTDTGVRVGTIEHLMSAFAGFGIDNLVVEVTAAEIPIMDGSAAPFLYLLQTAGVVDQPKKKRFIRVKQSVMVEDRGVWVRLDPHDGFKITLSIEFNHPAFNRAPQTVEVDFARHSYMDEISRARTFGFMHEVEYMRNHGLGRGGSLDNAIVIDDEYVLNPEGLRFPDEFVRHKILDAIGDLYIVGHPLIAAFSGHKSGHAMNNRLLRKLLETPEAWEFASFDDPLDAPSSFHQLPPQE.

Zn(2+)-binding residues include His-79, His-238, and Asp-242. His-265 functions as the Proton donor in the catalytic mechanism.

This sequence belongs to the LpxC family. It depends on Zn(2+) as a cofactor.

The enzyme catalyses a UDP-3-O-[(3R)-3-hydroxyacyl]-N-acetyl-alpha-D-glucosamine + H2O = a UDP-3-O-[(3R)-3-hydroxyacyl]-alpha-D-glucosamine + acetate. Its pathway is glycolipid biosynthesis; lipid IV(A) biosynthesis; lipid IV(A) from (3R)-3-hydroxytetradecanoyl-[acyl-carrier-protein] and UDP-N-acetyl-alpha-D-glucosamine: step 2/6. Functionally, catalyzes the hydrolysis of UDP-3-O-myristoyl-N-acetylglucosamine to form UDP-3-O-myristoylglucosamine and acetate, the committed step in lipid A biosynthesis. The chain is UDP-3-O-acyl-N-acetylglucosamine deacetylase from Chromobacterium violaceum (strain ATCC 12472 / DSM 30191 / JCM 1249 / CCUG 213 / NBRC 12614 / NCIMB 9131 / NCTC 9757 / MK).